Reading from the N-terminus, the 66-residue chain is MAKGKDVRIRVILECISCVRKGTNKESTGISRYSTQKNRHNTPGQLELRKFCRYCRKHTTHNEIKK.

Belongs to the bacterial ribosomal protein bL33 family.

The protein localises to the plastid. It is found in the chloroplast. The sequence is that of Large ribosomal subunit protein bL33c from Saccharum officinarum (Sugarcane).